A 228-amino-acid polypeptide reads, in one-letter code: MSEPTLRLSGIEKTYLSGTPGEVRVLRGVDLSVEPGEMVALVAPSGAGKSTLLHISGLLDVPDAGRVEIAGQDMTGRGDRARTGVRRRDVGFVYQFHHLLPEFTALENVVLPQLANGIGEGEARARARALLSRVGVEGRAGHRPAALSGGEQQRVAFCRALANAPRLLLADEPTGNLDPATSDQVFDALVELVRGTGLSALIATHNLELAARMDRVVRLSDGRLSAES.

One can recognise an ABC transporter domain in the interval 6–228 (LRLSGIEKTY…LSDGRLSAES (223 aa)). ATP is bound at residue 43-50 (APSGAGKS).

This sequence belongs to the ABC transporter superfamily. Lipoprotein translocase (TC 3.A.1.125) family. As to quaternary structure, the complex is composed of two ATP-binding proteins (LolD) and two transmembrane proteins (LolC and LolE).

Its subcellular location is the cell inner membrane. Part of the ABC transporter complex LolCDE involved in the translocation of mature outer membrane-directed lipoproteins, from the inner membrane to the periplasmic chaperone, LolA. Responsible for the formation of the LolA-lipoprotein complex in an ATP-dependent manner. This Ruegeria pomeroyi (strain ATCC 700808 / DSM 15171 / DSS-3) (Silicibacter pomeroyi) protein is Lipoprotein-releasing system ATP-binding protein LolD.